The sequence spans 622 residues: Low affinity potassium transport system protein Kup (622 aa).

Helical transmembrane passes span 9–29 (LPAI…TSPL), 49–69 (VFGF…IKYL), 103–123 (VIMG…TPAI), 137–157 (PQLD…LFMI), 165–185 (VGKL…GLGL), 213–233 (VSFI…ALYA), 247–267 (WFTV…ALLL), 276–296 (PFFL…AALA), 337–357 (IYIP…IVSF), 363–383 (LAAA…ILST), 396–416 (FVAL…TANL), and 419–439 (LLSG…VMTT).

Belongs to the HAK/KUP transporter (TC 2.A.72) family.

The protein localises to the cell inner membrane. It catalyses the reaction K(+)(in) + H(+)(in) = K(+)(out) + H(+)(out). Its function is as follows. Responsible for the low-affinity transport of potassium into the cell. Likely operates as a K(+):H(+) symporter. The sequence is that of Low affinity potassium transport system protein Kup from Escherichia fergusonii (strain ATCC 35469 / DSM 13698 / CCUG 18766 / IAM 14443 / JCM 21226 / LMG 7866 / NBRC 102419 / NCTC 12128 / CDC 0568-73).